We begin with the raw amino-acid sequence, 255 residues long: Acetylglutamate kinase (255 aa).

Residues 40–41, arginine 62, and asparagine 153 contribute to the substrate site; that span reads GG.

The protein belongs to the acetylglutamate kinase family. ArgB subfamily.

It localises to the cytoplasm. It carries out the reaction N-acetyl-L-glutamate + ATP = N-acetyl-L-glutamyl 5-phosphate + ADP. Its pathway is amino-acid biosynthesis; L-arginine biosynthesis; N(2)-acetyl-L-ornithine from L-glutamate: step 2/4. In terms of biological role, catalyzes the ATP-dependent phosphorylation of N-acetyl-L-glutamate. In Bacillus cereus (strain B4264), this protein is Acetylglutamate kinase.